A 264-amino-acid chain; its full sequence is Pyridoxine 5'-phosphate synthase (264 aa).

Positions Met1–Lys21 are enriched in polar residues. The segment at Met1–Lys22 is disordered. 3-amino-2-oxopropyl phosphate is bound at residue Asn28. Asp30–His31 contacts 1-deoxy-D-xylulose 5-phosphate. 3-amino-2-oxopropyl phosphate is bound at residue Arg39. Residue His64 is the Proton acceptor of the active site. 2 residues coordinate 1-deoxy-D-xylulose 5-phosphate: Arg66 and His71. Glu91 serves as the catalytic Proton acceptor. A 1-deoxy-D-xylulose 5-phosphate-binding site is contributed by Thr121. The active-site Proton donor is the His217. 3-amino-2-oxopropyl phosphate is bound by residues Gly218 and Gly239–His240.

The protein belongs to the PNP synthase family. Homooctamer; tetramer of dimers.

It localises to the cytoplasm. The enzyme catalyses 3-amino-2-oxopropyl phosphate + 1-deoxy-D-xylulose 5-phosphate = pyridoxine 5'-phosphate + phosphate + 2 H2O + H(+). It participates in cofactor biosynthesis; pyridoxine 5'-phosphate biosynthesis; pyridoxine 5'-phosphate from D-erythrose 4-phosphate: step 5/5. In terms of biological role, catalyzes the complicated ring closure reaction between the two acyclic compounds 1-deoxy-D-xylulose-5-phosphate (DXP) and 3-amino-2-oxopropyl phosphate (1-amino-acetone-3-phosphate or AAP) to form pyridoxine 5'-phosphate (PNP) and inorganic phosphate. This Psychrobacter cryohalolentis (strain ATCC BAA-1226 / DSM 17306 / VKM B-2378 / K5) protein is Pyridoxine 5'-phosphate synthase.